Consider the following 901-residue polypeptide: HTH-type transcriptional regulator MalT (901 aa).

An ATP-binding site is contributed by Ser-39–Thr-46. An HTH luxR-type domain is found at Glu-829–Leu-894. The H-T-H motif DNA-binding region spans Asn-853–Arg-872.

It belongs to the MalT family. As to quaternary structure, monomer in solution. Oligomerizes to an active state in the presence of the positive effectors ATP and maltotriose.

With respect to regulation, activated by ATP and maltotriose, which are both required for DNA binding. In terms of biological role, positively regulates the transcription of the maltose regulon whose gene products are responsible for uptake and catabolism of malto-oligosaccharides. Specifically binds to the promoter region of its target genes, recognizing a short DNA motif called the MalT box. This Escherichia coli O139:H28 (strain E24377A / ETEC) protein is HTH-type transcriptional regulator MalT.